Consider the following 657-residue polypeptide: Putative serine protease (657 aa).

3 helical membrane-spanning segments follow: residues 4–24 (YLAT…LLMP), 46–62 (WLLT…PSGT), and 109–131 (LLSG…VLML). One can recognise a Peptidase S39 domain in the interval 239–434 (QPGSDFVECE…ETDRYARTME (196 aa)). Active-site for protease activity residues include His284, Asp318, and Ser386. A disordered region spans residues 513 to 605 (PLGGLPISNG…PPSTGSVPKS (93 aa)). Residues 548–559 (HTRRRRRNKKKS) show a composition bias toward basic residues. Positions 560-569 (KNSETGHGPE) are enriched in basic and acidic residues. The segment covering 571–589 (QSQQQSRPSSPIPDDSAPV) has biased composition (low complexity).

It belongs to the peptidase S39B family.

The protein resides in the host membrane. Its function is as follows. Putative serine protease. In Mushroom bacilliform virus (isolate Australia/AUS LF-1) (MBV), this protein is Putative serine protease.